Consider the following 230-residue polypeptide: tRNA (guanine-N(7)-)-methyltransferase (230 aa).

The S-adenosyl-L-methionine site is built by E61, E86, D113, and D135. The active site involves D135. Substrate contacts are provided by residues K139, D171, and 209-212; that span reads TRYE.

This sequence belongs to the class I-like SAM-binding methyltransferase superfamily. TrmB family.

The enzyme catalyses guanosine(46) in tRNA + S-adenosyl-L-methionine = N(7)-methylguanosine(46) in tRNA + S-adenosyl-L-homocysteine. It functions in the pathway tRNA modification; N(7)-methylguanine-tRNA biosynthesis. Catalyzes the formation of N(7)-methylguanine at position 46 (m7G46) in tRNA. The chain is tRNA (guanine-N(7)-)-methyltransferase from Rhizobium etli (strain ATCC 51251 / DSM 11541 / JCM 21823 / NBRC 15573 / CFN 42).